A 130-amino-acid polypeptide reads, in one-letter code: Small ribosomal subunit protein uS9 (130 aa).

Belongs to the universal ribosomal protein uS9 family.

The protein is Small ribosomal subunit protein uS9 of Burkholderia vietnamiensis (strain G4 / LMG 22486) (Burkholderia cepacia (strain R1808)).